Here is a 1242-residue protein sequence, read N- to C-terminus: MEPLRPQITYGPIETVDNEELTEADMLSFISAAVNSTGLIGYNIKSFDDLMDNGIPQIVKQMFNVDITYKDQRDHTEIDKLRESVQIQFNFTDVNIERPQHRNYSQGNKINLLPNKARLSGLSYSGPVKLAAEVILTAHYSNGRQEVKRASIPPFQVSTFPIMRGSNRCHTHDLSKTAKKEIGEDPNEPGGYFIARGGEWVVDLLENIRFNTLHIHYHTMQQGNNEIIRGEFISQPGGAFENSSQIIIRYMTTGAITIEINSTKFSKLRIPWYLIFRMFGMTGDDSIIEQVVFDLESNSPVNTFMIEILEKSIHVSDPIFQPVQHELNREKIIQFLSEKVSKFVSNPSAYKSDENAVQYLNERQLTILDKILLPHMGQTADTRVRKLRFLGLLIHKILLVIMNVFPPTDRDSYRTKRVHGSGVSLAKAFKAIFNTSVIAPIINGFKELLKQTAFEELTQRNIIEAFSAALSKNTASDLNRSMEQSIISGNKTIMVRQRPIVNRVSTQSLERKNLLNTISALRTVNTHSTTNASKQTERADMMRRVHASYPGYICVAQSADTGEKVGMSKQLAITANVCTAGEVLSLKQRLLSDPAIQQLADVSNKDIVRKGLARVFINGEWIGCCTNAFELAQRYRMLRREGKIVHPHTTIYWDSMVDEVEFWLDVGRLTRPLLIVDNNIEKYNEACYKAAEARKKGNKDWEKHKISFVQNTRFTSQMAKAILAGTLTLEDLVAQGICEFITPEEAENCLVAFSITELRKHKHDVTRRFTHVDVPQSILGLAALVSPYANCTQPARVTYETNQGRQTGGWYCFSWPYRVDMNRFFQFYNEMPLVKTIAHNYVIPNGLNTIVAYMIYGGYNQEDSVIVSQSFIDRGGFAGTFYREEKVELESDIESFGKPDPLITKNLKPGANYEKLVDGFVPVGTVVKKGDIIIGKVAKIRGEKDELNKYIDRSVMYGFDEPAVVDAVMRPHGPNDEIFGLMRLRYERNLNIGDKMSSRSGNKGIAALALPTSDMPFTEDGLQPDLIVNPHSHPSRMTNGQMIETTVGLANALQGVVTDGTAFLPINVQLLSERLAQEGLRFNGCQKMFNGQTGEYFDAAIFIGPTYHQRLQKFVLDDRYAVASYGPTDALTGQPLDGKRSHGGLRLGEMEHWVLTAQGAMQTIIEKSHDDSDGCISYICRNCGEPAIYNASHPIYKCMNCDVQADISMVDSRRSSIVFQHEMRAANVNITSVLSPRVFQPA.

A C4-type zinc finger spans residues 1180 to 1201 (CRNCGEPAIYNASHPIYKCMNC).

This sequence belongs to the RNA polymerase beta chain family. In terms of assembly, part of the viral DNA-directed RNA polymerase that consists of 8 polII-like subunits (RPB1, RPB2, RPB3, RPB5, RPB6, RPB7, RPB9, RPB10), a capping enzyme and a termination factor.

The protein resides in the host cytoplasm. Its subcellular location is the virion. The catalysed reaction is RNA(n) + a ribonucleoside 5'-triphosphate = RNA(n+1) + diphosphate. Catalytic component of the DNA-directed RNA polymerase (RNAP) that catalyzes the transcription in the cytoplasm of viral DNA into RNA using the four ribonucleoside triphosphates as substrates. Forms the polymerase active center together with RPB1. Part of the core element with the central large cleft, the clamp element that moves to open and close the cleft and the jaws that are thought to grab the incoming DNA template. This African swine fever virus (isolate Pig/Kenya/KEN-50/1950) (ASFV) protein is DNA-directed RNA polymerase RPB2 homolog.